Here is a 224-residue protein sequence, read N- to C-terminus: Type II restriction enzyme BstVI (224 aa).

The protein belongs to the XhoI type II restriction endonuclease family.

The catalysed reaction is Endonucleolytic cleavage of DNA to give specific double-stranded fragments with terminal 5'-phosphates.. A P subtype restriction enzyme that recognizes the double-stranded sequence 5'-CTCGAG-3' and cleaves after C-1. This chain is Type II restriction enzyme BstVI, found in Geobacillus stearothermophilus (Bacillus stearothermophilus).